A 353-amino-acid polypeptide reads, in one-letter code: Phospho-N-acetylmuramoyl-pentapeptide-transferase (353 aa).

The next 10 membrane-spanning stretches (helical) occupy residues 22–42 (FAFF…ITWA), 65–85 (TPTM…LFCI), 88–108 (DNIF…IGLI), 129–149 (LLAQ…SSEL), 161–181 (PLFD…ISSS), 192–212 (GLAT…LYLS), 228–248 (GLGE…GFLW), 256–276 (VFMG…LAII), 281–301 (ILLL…ILQV), and 330–350 (KIIV…LASI).

The protein belongs to the glycosyltransferase 4 family. MraY subfamily. Requires Mg(2+) as cofactor.

It is found in the cell inner membrane. The enzyme catalyses UDP-N-acetyl-alpha-D-muramoyl-L-alanyl-gamma-D-glutamyl-meso-2,6-diaminopimeloyl-D-alanyl-D-alanine + di-trans,octa-cis-undecaprenyl phosphate = di-trans,octa-cis-undecaprenyl diphospho-N-acetyl-alpha-D-muramoyl-L-alanyl-D-glutamyl-meso-2,6-diaminopimeloyl-D-alanyl-D-alanine + UMP. It functions in the pathway cell wall biogenesis; peptidoglycan biosynthesis. Catalyzes the initial step of the lipid cycle reactions in the biosynthesis of the cell wall peptidoglycan: transfers peptidoglycan precursor phospho-MurNAc-pentapeptide from UDP-MurNAc-pentapeptide onto the lipid carrier undecaprenyl phosphate, yielding undecaprenyl-pyrophosphoryl-MurNAc-pentapeptide, known as lipid I. This is Phospho-N-acetylmuramoyl-pentapeptide-transferase from Campylobacter jejuni (strain RM1221).